A 247-amino-acid polypeptide reads, in one-letter code: MTKGILGRKVGMTQVFTDKGELIPVTVIEALPNVVLQVKTPETDGYSALQLGVFDKRKIAANKPEQGHAKKASAAPKRYVREIRDAQGDYKQGDKVKVDVFAAGEYVDVQGITKGHGFQGSIKRLGQSRGPMAHGSRYHRRPGSMGSIINKVFKGKLLPGQMGGDLRTAQKLLVAGVDPANNLILIKGNVPGANKSFVTIKSTVKPFKASKIKLGGTVGQEVKAEAKDTASTEKKQAETKNDSASAE.

Disordered regions lie at residues 124-145 (RLGQSRGPMAHGSRYHRRPGSM) and 218-247 (VGQEVKAEAKDTASTEKKQAETKNDSASAE). Basic and acidic residues predominate over residues 222–241 (VKAEAKDTASTEKKQAETKN).

Belongs to the universal ribosomal protein uL3 family. As to quaternary structure, part of the 50S ribosomal subunit. Forms a cluster with proteins L14 and L19.

Its function is as follows. One of the primary rRNA binding proteins, it binds directly near the 3'-end of the 23S rRNA, where it nucleates assembly of the 50S subunit. The chain is Large ribosomal subunit protein uL3 from Oenococcus oeni (strain ATCC BAA-331 / PSU-1).